Here is a 381-residue protein sequence, read N- to C-terminus: Acetylornithine deacetylase (381 aa).

His79 is a Zn(2+) binding site. Asp81 is an active-site residue. Asp111 contributes to the Zn(2+) binding site. Glu143 is a catalytic residue. Zn(2+)-binding residues include Glu144, Glu168, and His354.

This sequence belongs to the peptidase M20A family. ArgE subfamily. As to quaternary structure, homodimer. It depends on Zn(2+) as a cofactor. The cofactor is Co(2+). Requires glutathione as cofactor.

Its subcellular location is the cytoplasm. The enzyme catalyses N(2)-acetyl-L-ornithine + H2O = L-ornithine + acetate. It functions in the pathway amino-acid biosynthesis; L-arginine biosynthesis; L-ornithine from N(2)-acetyl-L-ornithine (linear): step 1/1. Catalyzes the hydrolysis of the amide bond of N(2)-acetylated L-amino acids. Cleaves the acetyl group from N-acetyl-L-ornithine to form L-ornithine, an intermediate in L-arginine biosynthesis pathway, and a branchpoint in the synthesis of polyamines. This Buchnera aphidicola subsp. Acyrthosiphon pisum (strain Tuc7) protein is Acetylornithine deacetylase.